A 111-amino-acid polypeptide reads, in one-letter code: Large ribosomal subunit protein eL30 (111 aa).

This sequence belongs to the eukaryotic ribosomal protein eL30 family.

The protein is Large ribosomal subunit protein eL30 (RPL30) of Oryza sativa subsp. japonica (Rice).